We begin with the raw amino-acid sequence, 349 residues long: NADH-quinone oxidoreductase subunit H (349 aa).

A run of 8 helical transmembrane segments spans residues 14 to 34 (LLVW…GCVA), 85 to 105 (GLFL…WAVI), 120 to 140 (LLYI…AGWA), 164 to 184 (MGFA…VDIV), 196 to 216 (ILSW…ISGV), 243 to 263 (GMAF…VAAL), 285 to 305 (AGGF…FLWF), and 324 to 344 (VFIP…FSPL).

It belongs to the complex I subunit 1 family. As to quaternary structure, NDH-1 is composed of 14 different subunits. Subunits NuoA, H, J, K, L, M, N constitute the membrane sector of the complex.

It localises to the cell inner membrane. It carries out the reaction a quinone + NADH + 5 H(+)(in) = a quinol + NAD(+) + 4 H(+)(out). Functionally, NDH-1 shuttles electrons from NADH, via FMN and iron-sulfur (Fe-S) centers, to quinones in the respiratory chain. The immediate electron acceptor for the enzyme in this species is believed to be ubiquinone. Couples the redox reaction to proton translocation (for every two electrons transferred, four hydrogen ions are translocated across the cytoplasmic membrane), and thus conserves the redox energy in a proton gradient. This subunit may bind ubiquinone. The sequence is that of NADH-quinone oxidoreductase subunit H from Chromobacterium violaceum (strain ATCC 12472 / DSM 30191 / JCM 1249 / CCUG 213 / NBRC 12614 / NCIMB 9131 / NCTC 9757 / MK).